The following is a 352-amino-acid chain: GTPase Obg (352 aa).

The region spanning 1-159 is the Obg domain; the sequence is MHFLDQAKIF…MYVWLRLKLL (159 aa). The tract at residues 122-142 is disordered; sequence DGGRGNASYKTSTNRAPRQHG. An OBG-type G domain is found at 160-328; the sequence is ADAGLVGLPN…LLDAVLEYLP (169 aa). GTP is bound by residues 166–173, 191–195, 212–215, 280–283, and 309–311; these read GLPNAGKS, FTTLR, DIPG, NKID, and SGA. Mg(2+) contacts are provided by Ser173 and Thr193.

Belongs to the TRAFAC class OBG-HflX-like GTPase superfamily. OBG GTPase family. As to quaternary structure, monomer. Mg(2+) is required as a cofactor.

It is found in the cytoplasm. In terms of biological role, an essential GTPase which binds GTP, GDP and possibly (p)ppGpp with moderate affinity, with high nucleotide exchange rates and a fairly low GTP hydrolysis rate. Plays a role in control of the cell cycle, stress response, ribosome biogenesis and in those bacteria that undergo differentiation, in morphogenesis control. The polypeptide is GTPase Obg (Novosphingobium aromaticivorans (strain ATCC 700278 / DSM 12444 / CCUG 56034 / CIP 105152 / NBRC 16084 / F199)).